Reading from the N-terminus, the 242-residue chain is 1-(5-phosphoribosyl)-5-[(5-phosphoribosylamino)methylideneamino] imidazole-4-carboxamide isomerase (242 aa).

Aspartate 10 functions as the Proton acceptor in the catalytic mechanism.

It belongs to the HisA/HisF family.

The protein localises to the cytoplasm. It carries out the reaction 1-(5-phospho-beta-D-ribosyl)-5-[(5-phospho-beta-D-ribosylamino)methylideneamino]imidazole-4-carboxamide = 5-[(5-phospho-1-deoxy-D-ribulos-1-ylimino)methylamino]-1-(5-phospho-beta-D-ribosyl)imidazole-4-carboxamide. Its pathway is amino-acid biosynthesis; L-histidine biosynthesis; L-histidine from 5-phospho-alpha-D-ribose 1-diphosphate: step 4/9. The chain is 1-(5-phosphoribosyl)-5-[(5-phosphoribosylamino)methylideneamino] imidazole-4-carboxamide isomerase from Corynebacterium diphtheriae (strain ATCC 700971 / NCTC 13129 / Biotype gravis).